The chain runs to 629 residues: tRNA uridine 5-carboxymethylaminomethyl modification enzyme MnmG (629 aa).

Residues 13–18, Val125, and Ser180 contribute to the FAD site; that span reads GGGHAG. Position 273–287 (273–287) interacts with NAD(+); the sequence is GPRYCPSIEDKVMRF. Gln370 serves as a coordination point for FAD.

It belongs to the MnmG family. As to quaternary structure, homodimer. Heterotetramer of two MnmE and two MnmG subunits. FAD serves as cofactor.

The protein resides in the cytoplasm. Functionally, NAD-binding protein involved in the addition of a carboxymethylaminomethyl (cmnm) group at the wobble position (U34) of certain tRNAs, forming tRNA-cmnm(5)s(2)U34. This is tRNA uridine 5-carboxymethylaminomethyl modification enzyme MnmG from Salmonella paratyphi C (strain RKS4594).